The following is a 321-amino-acid chain: Ras association domain-containing protein 4 (321 aa).

Positions H79 to A159 are disordered. Polar residues predominate over residues S98–S110. S141 is subject to Phosphoserine. In terms of domain architecture, Ras-associating spans Y174–L262. One can recognise an SARAH domain in the interval V270–L317.

Interacts directly with activated KRAS in a GTP-dependent manner. Widely expressed. Frequently down-regulated in tumor cell lines.

Potential tumor suppressor. May act as a KRAS effector protein. May promote apoptosis and cell cycle arrest. In Homo sapiens (Human), this protein is Ras association domain-containing protein 4 (RASSF4).